The chain runs to 478 residues: UDP-N-acetylmuramate--L-alanine ligase (478 aa).

It belongs to the MurCDEF family.

The protein localises to the cytoplasm. The catalysed reaction is UDP-N-acetyl-alpha-D-muramate + L-alanine + ATP = UDP-N-acetyl-alpha-D-muramoyl-L-alanine + ADP + phosphate + H(+). The protein operates within cell wall biogenesis; peptidoglycan biosynthesis. Its function is as follows. Cell wall formation. The sequence is that of UDP-N-acetylmuramate--L-alanine ligase (murC) from Synechococcus elongatus (strain ATCC 33912 / PCC 7942 / FACHB-805) (Anacystis nidulans R2).